Here is a 503-residue protein sequence, read N- to C-terminus: 2,3-bisphosphoglycerate-independent phosphoglycerate mutase (503 aa).

Residues Asp10 and Ser60 each coordinate Mn(2+). The Phosphoserine intermediate role is filled by Ser60. Substrate contacts are provided by residues His121, 150 to 151, Arg181, Arg187, 256 to 259, and Lys330; these read RD and RPDR. 5 residues coordinate Mn(2+): Asp396, His400, Asp437, His438, and His455.

The protein belongs to the BPG-independent phosphoglycerate mutase family. In terms of assembly, monomer. Mn(2+) serves as cofactor.

It carries out the reaction (2R)-2-phosphoglycerate = (2R)-3-phosphoglycerate. Its pathway is carbohydrate degradation; glycolysis; pyruvate from D-glyceraldehyde 3-phosphate: step 3/5. In terms of biological role, catalyzes the interconversion of 2-phosphoglycerate and 3-phosphoglycerate. The protein is 2,3-bisphosphoglycerate-independent phosphoglycerate mutase of Mycoplasmoides gallisepticum (strain R(low / passage 15 / clone 2)) (Mycoplasma gallisepticum).